Here is a 631-residue protein sequence, read N- to C-terminus: tRNA 5-methylaminomethyl-2-thiouridine biosynthesis bifunctional protein MnmC (631 aa).

The tract at residues methionine 1–proline 243 is tRNA (mnm(5)s(2)U34)-methyltransferase. Residues isoleucine 261–valine 631 are FAD-dependent cmnm(5)s(2)U34 oxidoreductase.

The protein in the N-terminal section; belongs to the methyltransferase superfamily. tRNA (mnm(5)s(2)U34)-methyltransferase family. It in the C-terminal section; belongs to the DAO family. It depends on FAD as a cofactor.

It is found in the cytoplasm. It carries out the reaction 5-aminomethyl-2-thiouridine(34) in tRNA + S-adenosyl-L-methionine = 5-methylaminomethyl-2-thiouridine(34) in tRNA + S-adenosyl-L-homocysteine + H(+). Functionally, catalyzes the last two steps in the biosynthesis of 5-methylaminomethyl-2-thiouridine (mnm(5)s(2)U) at the wobble position (U34) in tRNA. Catalyzes the FAD-dependent demodification of cmnm(5)s(2)U34 to nm(5)s(2)U34, followed by the transfer of a methyl group from S-adenosyl-L-methionine to nm(5)s(2)U34, to form mnm(5)s(2)U34. The sequence is that of tRNA 5-methylaminomethyl-2-thiouridine biosynthesis bifunctional protein MnmC from Marinobacter nauticus (strain ATCC 700491 / DSM 11845 / VT8) (Marinobacter aquaeolei).